Consider the following 607-residue polypeptide: Thymidine kinase (607 aa).

Disordered stretches follow at residues 1–160 and 180–215; these read MAGF…ADST and DDKS…PSGL. Basic and acidic residues predominate over residues 17–32; sequence KCQEDESPENERHENF. Composition is skewed to polar residues over residues 88-106, 148-160, and 194-203; these read AAVT…TSCP, RKTS…ADST, and RRPSSHSALK. 291–298 contacts ATP; it reads GAPGVGKT. E317 functions as the Proton acceptor in the catalytic mechanism. Q355 is a substrate binding site. R445 lines the ATP pocket. Position 451 (R451) interacts with substrate.

This sequence belongs to the herpesviridae thymidine kinase family. In terms of assembly, homodimer.

It localises to the virion tegument. It is found in the host nucleus. The enzyme catalyses thymidine + ATP = dTMP + ADP + H(+). In terms of biological role, catalyzes the transfer of the gamma-phospho group of ATP to thymidine to generate dTMP in the salvage pathway of pyrimidine synthesis. The dTMP serves as a substrate for DNA polymerase during viral DNA replication. Allows the virus to be reactivated and to grow in non-proliferative cells lacking a high concentration of phosphorylated nucleic acid precursors. The polypeptide is Thymidine kinase (Epstein-Barr virus (strain AG876) (HHV-4)).